Reading from the N-terminus, the 366-residue chain is tRNA/tmRNA (uracil-C(5))-methyltransferase (366 aa).

S-adenosyl-L-methionine-binding residues include Q190, Y218, N223, E239, and D299. Residue C324 is the Nucleophile of the active site. E358 (proton acceptor) is an active-site residue.

This sequence belongs to the class I-like SAM-binding methyltransferase superfamily. RNA M5U methyltransferase family. TrmA subfamily.

The catalysed reaction is uridine(54) in tRNA + S-adenosyl-L-methionine = 5-methyluridine(54) in tRNA + S-adenosyl-L-homocysteine + H(+). It catalyses the reaction uridine(341) in tmRNA + S-adenosyl-L-methionine = 5-methyluridine(341) in tmRNA + S-adenosyl-L-homocysteine + H(+). In terms of biological role, dual-specificity methyltransferase that catalyzes the formation of 5-methyluridine at position 54 (m5U54) in all tRNAs, and that of position 341 (m5U341) in tmRNA (transfer-mRNA). This chain is tRNA/tmRNA (uracil-C(5))-methyltransferase, found in Escherichia coli O157:H7 (strain EC4115 / EHEC).